The sequence spans 206 residues: FMN-dependent NADH:quinone oxidoreductase (206 aa).

FMN-binding positions include 15-17 (SVS), 94-97 (MYNF), and 138-141 (TRGG).

The protein belongs to the azoreductase type 1 family. Homodimer. FMN is required as a cofactor.

It catalyses the reaction 2 a quinone + NADH + H(+) = 2 a 1,4-benzosemiquinone + NAD(+). The enzyme catalyses N,N-dimethyl-1,4-phenylenediamine + anthranilate + 2 NAD(+) = 2-(4-dimethylaminophenyl)diazenylbenzoate + 2 NADH + 2 H(+). Its function is as follows. Quinone reductase that provides resistance to thiol-specific stress caused by electrophilic quinones. In terms of biological role, also exhibits azoreductase activity. Catalyzes the reductive cleavage of the azo bond in aromatic azo compounds to the corresponding amines. The polypeptide is FMN-dependent NADH:quinone oxidoreductase (Sinorhizobium fredii (strain NBRC 101917 / NGR234)).